Consider the following 77-residue polypeptide: Small ribosomal subunit protein bS20 (77 aa).

Belongs to the bacterial ribosomal protein bS20 family.

Its function is as follows. Binds directly to 16S ribosomal RNA. In Streptococcus agalactiae serotype Ia (strain ATCC 27591 / A909 / CDC SS700), this protein is Small ribosomal subunit protein bS20.